The primary structure comprises 132 residues: Fatty acid-binding protein 12 (132 aa).

A fatty acid contacts are provided by residues R107 and 127 to 129; that span reads RTY.

It belongs to the calycin superfamily. Fatty-acid binding protein (FABP) family. Highly expressed in adult retina and testis.

Functionally, may play a role in lipid transport. This Mus musculus (Mouse) protein is Fatty acid-binding protein 12 (Fabp12).